Reading from the N-terminus, the 231-residue chain is 5'-methylthioadenosine/S-adenosylhomocysteine nucleosidase (231 aa).

Residue Glu12 is the Proton acceptor of the active site. Substrate contacts are provided by residues Gly78, Met153, and Met174–Glu175. The active-site Proton donor is Asp198.

This sequence belongs to the PNP/UDP phosphorylase family. MtnN subfamily.

The enzyme catalyses S-adenosyl-L-homocysteine + H2O = S-(5-deoxy-D-ribos-5-yl)-L-homocysteine + adenine. It catalyses the reaction S-methyl-5'-thioadenosine + H2O = 5-(methylsulfanyl)-D-ribose + adenine. It carries out the reaction 5'-deoxyadenosine + H2O = 5-deoxy-D-ribose + adenine. The protein operates within amino-acid biosynthesis; L-methionine biosynthesis via salvage pathway; S-methyl-5-thio-alpha-D-ribose 1-phosphate from S-methyl-5'-thioadenosine (hydrolase route): step 1/2. Its function is as follows. Catalyzes the irreversible cleavage of the glycosidic bond in both 5'-methylthioadenosine (MTA) and S-adenosylhomocysteine (SAH/AdoHcy) to adenine and the corresponding thioribose, 5'-methylthioribose and S-ribosylhomocysteine, respectively. Also cleaves 5'-deoxyadenosine, a toxic by-product of radical S-adenosylmethionine (SAM) enzymes, into 5-deoxyribose and adenine. The sequence is that of 5'-methylthioadenosine/S-adenosylhomocysteine nucleosidase from Bacillus cereus (strain B4264).